A 145-amino-acid chain; its full sequence is Lysozyme-like protein 4 (145 aa).

The signal sequence occupies residues 1–19; it reads MQLYLVLLLISYLLTPIGA. Positions 20 to 145 constitute a C-type lysozyme domain; the sequence is SILGRCTVAK…LDRWLDGCDL (126 aa). 4 disulfide bridges follow: Cys-25/Cys-143, Cys-49/Cys-130, Cys-84/Cys-95, and Cys-91/Cys-109. The active site involves Glu-54.

It belongs to the glycosyl hydrolase 22 family. In terms of assembly, monomer. Expressed strongly in testis and in epididymis, and weakly in brain and lung. Detected in sperm (at protein level).

Its subcellular location is the secreted. It is found in the cytoplasmic vesicle. It localises to the secretory vesicle. The protein localises to the acrosome. The protein resides in the cell projection. Its subcellular location is the cilium. It is found in the flagellum. May be involved in fertilization. Has no detectable bacteriolytic in vitro. Has no lysozyme activity in vitro. The sequence is that of Lysozyme-like protein 4 (Lyzl4) from Mus musculus (Mouse).